The following is a 311-amino-acid chain: Ribonuclease Z (311 aa).

Residues His61, His63, Asp65, His66, His139, Asp210, and His268 each contribute to the Zn(2+) site. Asp65 (proton acceptor) is an active-site residue.

The protein belongs to the RNase Z family. As to quaternary structure, homodimer. It depends on Zn(2+) as a cofactor.

The enzyme catalyses Endonucleolytic cleavage of RNA, removing extra 3' nucleotides from tRNA precursor, generating 3' termini of tRNAs. A 3'-hydroxy group is left at the tRNA terminus and a 5'-phosphoryl group is left at the trailer molecule.. Its function is as follows. Zinc phosphodiesterase, which displays some tRNA 3'-processing endonuclease activity. Probably involved in tRNA maturation, by removing a 3'-trailer from precursor tRNA. This is Ribonuclease Z from Haloarcula marismortui (strain ATCC 43049 / DSM 3752 / JCM 8966 / VKM B-1809) (Halobacterium marismortui).